Consider the following 327-residue polypeptide: COP9 signalosome complex subunit 5 (327 aa).

The region spanning 52 to 189 is the MPN domain; it reads IKISALALLK…LGAFRTYPKG (138 aa). Zn(2+)-binding residues include H135, H137, and D148. The JAMM motif signature appears at 135–148; that stretch reads HSHPGYGCWLSGID. Phosphoserine occurs at positions 300 and 302. T303 carries the post-translational modification Phosphothreonine.

This sequence belongs to the peptidase M67A family. CSN5 subfamily. Component of the CSN complex, probably composed of CSN1b, alien/CSN2, CSN3, CSN4, CSN5, CSN6, CSN7 and CSN8. Interacts directly with CSN2. Also exists as monomeric form. Interacts via its MPN domain with Trc8. A divalent metal cation is required as a cofactor. As to expression, expressed in the optic lobe neuropil.

The protein resides in the cytoplasm. It localises to the nucleus. In terms of biological role, probable protease subunit of the COP9 signalosome complex (CSN), a complex involved in various cellular and developmental processes. The CSN complex is an essential regulator of the ubiquitin (Ubl) conjugation pathway by mediating the deneddylation of the cullin subunits of the SCF-type E3 ligase complexes, leading to decrease the Ubl ligase activity of SCF. In the complex, it probably acts as the catalytic center that mediates the cleavage of Nedd8 from cullins. It however has no metalloprotease activity by itself and requires the other subunits of the CSN complex. The CSN complex plays an essential role in oogenesis and embryogenesis and is required for proper photoreceptor R cell differentiation and promote lamina glial cell migration or axon targeting. It also promotes Ubl-dependent degradation of cyclin E (CycE) during early oogenesis. Also involved in regulation of axis formation by checkpoint-dependent, translational control of Gurken. The sequence is that of COP9 signalosome complex subunit 5 (CSN5) from Drosophila melanogaster (Fruit fly).